Here is a 720-residue protein sequence, read N- to C-terminus: Catalase-peroxidase (720 aa).

The tryptophyl-tyrosyl-methioninium (Trp-Tyr) (with M-248) cross-link spans 94-222 (WHAAGTYRIA…LAAVTMGLIY (129 aa)). His95 (proton acceptor) is an active-site residue. Positions 222–248 (YVNPEGVDGNPDPLKTAHDVRVTFARM) form a cross-link, tryptophyl-tyrosyl-methioninium (Tyr-Met) (with W-94). His263 lines the heme b pocket.

It belongs to the peroxidase family. Peroxidase/catalase subfamily. In terms of assembly, homodimer. Heme b is required as a cofactor. Formation of the three residue Trp-Tyr-Met cross-link is important for the catalase, but not the peroxidase activity of the enzyme.

The catalysed reaction is H2O2 + AH2 = A + 2 H2O. It carries out the reaction 2 H2O2 = O2 + 2 H2O. Its function is as follows. Bifunctional enzyme with both catalase and broad-spectrum peroxidase activity. The polypeptide is Catalase-peroxidase (Synechococcus elongatus (strain ATCC 33912 / PCC 7942 / FACHB-805) (Anacystis nidulans R2)).